The primary structure comprises 56 residues: Large ribosomal subunit protein bL33 (56 aa).

Belongs to the bacterial ribosomal protein bL33 family.

In Rickettsia prowazekii (strain Madrid E), this protein is Large ribosomal subunit protein bL33 (rpmG).